Here is a 146-residue protein sequence, read N- to C-terminus: Hemoglobin subunit beta (146 aa).

Val1 carries the N-acetylvaline modification. Residues 2–146 (HLTAEEKNAI…VANALAHKYH (145 aa)) form the Globin domain. Phosphothreonine is present on Thr12. Lys59 carries the post-translational modification N6-acetyllysine. His63 lines the heme b pocket. Residue Lys82 is modified to N6-acetyllysine. Residue His92 coordinates heme b. Residue Cys93 is modified to S-nitrosocysteine. N6-acetyllysine is present on Lys144.

The protein belongs to the globin family. Heterotetramer of two alpha chains and two beta chains. In terms of tissue distribution, red blood cells.

Its function is as follows. Involved in oxygen transport from the lung to the various peripheral tissues. This Osphranter rufus (Red kangaroo) protein is Hemoglobin subunit beta (HBB).